A 580-amino-acid polypeptide reads, in one-letter code: Efflux pump dotC (580 aa).

Over residues 1-34 (MSEDHTKADNLSEKDPHSPERSDSSSHEDAHARE) the composition is skewed to basic and acidic residues. A disordered region spans residues 1–45 (MSEDHTKADNLSEKDPHSPERSDSSSHEDAHAREEEESSDDDGAL). A glycan (N-linked (GlcNAc...) asparagine) is linked at Asn-10. The span at 35–44 (EEESSDDDGA) shows a compositional bias: acidic residues. Residues 49-69 (PASLIAIVMIALSLAVFLSAL) traverse the membrane as a helical segment. Asn-86 carries N-linked (GlcNAc...) asparagine glycosylation. The next 13 membrane-spanning stretches (helical) occupy residues 89–109 (AAYTWVGSAYLLANAASTPIW), 127–147 (ALFMIGSLVCALSINVGMLIT), 153–173 (GAAGGGLLTLVDTIIGDLFSL), 181–201 (GMIGGVWAIACALGPIVGGAF), 209–229 (WCFYINLPIDGLAFGIIFFFL), 242–262 (FAAIDWAGSFFIIGGTLMFLF), 275–295 (SATVICLLVFGVVCIVLFGLV), 318–338 (ALLVAFFHSFVFISAFYYLPL), 348–368 (PILAGVYILPAVLSTGVSAAA), 380–400 (LIPMYFGMSMMILGYGLLINF), 409–429 (LIIYQLIAGIGNGPNFQAPLV), 444–466 (TATFNFVRNIATAISVVAGQVLY), and 519–539 (SPMWIMYTAFAAAGLFCILLV). Residues 559-580 (KKAEAERKAERQAKDLEKAQKS) are disordered.

It belongs to the major facilitator superfamily. TCR/Tet family.

It is found in the cell membrane. Its subcellular location is the vacuole membrane. Functionally, efflux pump; part of the gene cluster that mediates the biosynthesis of dothistromin (DOTH), a polyketide toxin very similar in structure to the aflatoxin precursor, versicolorin B. One function of dotC may be to transport early-stage dothistromin biosynthetic intermediates from the cytoplasm into vacuoles, thereby affecting the rate of dothistromin production. The chain is Efflux pump dotC from Dothistroma septosporum (strain NZE10 / CBS 128990) (Red band needle blight fungus).